Here is an 860-residue protein sequence, read N- to C-terminus: Leucine--tRNA ligase (860 aa).

The 'HIGH' region motif lies at 42–52 (PYPSGRLHMGH). The short motif at 619-623 (KMSKS) is the 'KMSKS' region element. Lys622 contacts ATP.

The protein belongs to the class-I aminoacyl-tRNA synthetase family.

It localises to the cytoplasm. It carries out the reaction tRNA(Leu) + L-leucine + ATP = L-leucyl-tRNA(Leu) + AMP + diphosphate. The sequence is that of Leucine--tRNA ligase from Cronobacter sakazakii (strain ATCC BAA-894) (Enterobacter sakazakii).